Consider the following 176-residue polypeptide: Macro domain-containing protein lmo2759 (176 aa).

A Macro domain is found at 1–175 (MEITIVKGDI…LYNKLINSEV (175 aa)).

Belongs to the MacroD-type family.

The sequence is that of Macro domain-containing protein lmo2759 from Listeria monocytogenes serovar 1/2a (strain ATCC BAA-679 / EGD-e).